The sequence spans 846 residues: Matrin-3 (846 aa).

Ser-2 is modified (N-acetylserine). The residue at position 3 (Lys-3) is an N6-acetyllysine; alternate. Lys-3 participates in a covalent cross-link: Glycyl lysine isopeptide (Lys-Gly) (interchain with G-Cter in SUMO2); alternate. Ser-4, Ser-9, Ser-14, Ser-22, Ser-41, Ser-118, and Ser-126 each carry phosphoserine. Residues Lys-132 and Lys-146 each participate in a glycyl lysine isopeptide (Lys-Gly) (interchain with G-Cter in SUMO2) cross-link. Disordered stretches follow at residues 147 to 174 (RRRT…YRVP) and 187 to 213 (DSFD…ESGY). Residue Thr-150 is modified to Phosphothreonine. Ser-157 bears the Phosphoserine mark. Position 158 is a phosphotyrosine (Tyr-158). Basic and acidic residues predominate over residues 160–174 (RDGRSATREPPYRVP). A phosphoserine mark is found at Ser-164, Ser-188, and Ser-195. The segment covering 201–213 (DYDHGSRSQESGY) has biased composition (basic and acidic residues). Tyr-202 carries the phosphotyrosine modification. Ser-206, Ser-208, and Ser-211 each carry phosphoserine. Tyr-219 bears the Phosphotyrosine mark. The residue at position 234 (Ser-234) is a Phosphoserine. Lys-245 is covalently cross-linked (Glycyl lysine isopeptide (Lys-Gly) (interchain with G-Cter in SUMO2)). Position 264 is a phosphoserine (Ser-264). Residue Lys-269 forms a Glycyl lysine isopeptide (Lys-Gly) (interchain with G-Cter in SUMO2) linkage. Phosphoserine is present on Ser-275. Residues 342–394 (PFMLQQSTNPAPGILGPPPPSFHLGGPAVGPRGNLGAGNGNLQGPRHMQKGRV) are disordered. The region spanning 398-473 (RVVHIMDFQR…KPVRVHLSQK (76 aa)) is the RRM 1 domain. Glycyl lysine isopeptide (Lys-Gly) (interchain with G-Cter in SUMO2) cross-links involve residues Lys-478, Lys-487, and Lys-491. An RRM 2 domain is found at 496-571 (RVIHLSNLPH…RCVKVDLSEK (76 aa)). A phosphoserine mark is found at Ser-509 and Ser-511. Lys-515 is covalently cross-linked (Glycyl lysine isopeptide (Lys-Gly) (interchain with G-Cter in SUMO2)). The residue at position 522 (Lys-522) is an N6-acetyllysine; alternate. Lys-522 is covalently cross-linked (Glycyl lysine isopeptide (Lys-Gly) (interchain with G-Cter in SUMO2); alternate). Position 533 is a phosphoserine (Ser-533). Residues Lys-554 and Lys-555 each participate in a glycyl lysine isopeptide (Lys-Gly) (interchain with G-Cter in SUMO2) cross-link. Position 571 is an N6-acetyllysine (Lys-571). A disordered region spans residues 588–779 (KKDKSRKRSY…EDYTIPDEYR (192 aa)). A phosphoserine mark is found at Ser-596, Ser-598, Ser-604, and Ser-606. Residues 600-642 (DGKESPSDKKSKTDAQKTESPAEGKEQEEKSGEDGEKDTKDDQ) show a composition bias toward basic and acidic residues. Glycyl lysine isopeptide (Lys-Gly) (interchain with G-Cter in SUMO2) cross-links involve residues Lys-616 and Lys-629. A compositionally biased stretch (acidic residues) spans 652-664 (ESEDELLVDEEEA). A phosphoserine mark is found at Ser-653, Ser-670, Ser-672, and Ser-673. The span at 665-675 (AALLESGSSVG) shows a compositional bias: low complexity. Phosphothreonine is present on Thr-678. A Phosphoserine modification is found at Ser-688. A compositionally biased stretch (basic and acidic residues) spans 688–703 (SDGKKEPSDKAVKKDP). Positions 709–717 (SKKKLKKVD) match the Nuclear localization signal motif. Residues Lys-718 and Lys-735 each participate in a glycyl lysine isopeptide (Lys-Gly) (interchain with G-Cter in SUMO2) cross-link. Thr-740 is subject to Phosphothreonine. 2 positions are modified to phosphoserine: Ser-746 and Ser-758. Basic and acidic residues predominate over residues 766–779 (DENKEDYTIPDEYR). Lys-769 is covalently cross-linked (Glycyl lysine isopeptide (Lys-Gly) (interchain with G-Cter in SUMO2)). Residues 800-831 (FYCKLCSLFYTNEEVAKNTHCSSLPHYQKLKK) form a Matrin-type zinc finger. Position 835 is an N6-acetyllysine; alternate (Lys-835). Residue Lys-835 forms a Glycyl lysine isopeptide (Lys-Gly) (interchain with G-Cter in SUMO2); alternate linkage.

In terms of assembly, part of a complex consisting of SFPQ, NONO and MATR3. Interacts with AGO1 and AGO2. Part of a complex composed at least of ASH2L, EMSY, HCFC1, HSPA8, CCAR2, MATR3, MKI67, RBBP5, TUBB2A, WDR5 and ZNF335; this complex may have a histone H3-specific methyltransferase activity. Interacts with TARDBP. Part of the HDP-RNP complex composed of at least HEXIM1, PRKDC, XRCC5, XRCC6, paraspeckle proteins (SFPQ, NONO, PSPC1, RBM14, and MATR3) and NEAT1 RNA. Interacts with FUS. Interacts with IGF2BP1. Interacts with IGF2BP2 and IGF2BP3. Interacts with RBPMS.

Its subcellular location is the nucleus matrix. In terms of biological role, may play a role in transcription or may interact with other nuclear matrix proteins to form the internal fibrogranular network. In association with the SFPQ-NONO heteromer may play a role in nuclear retention of defective RNAs. Plays a role in the regulation of DNA virus-mediated innate immune response by assembling into the HDP-RNP complex, a complex that serves as a platform for IRF3 phosphorylation and subsequent innate immune response activation through the cGAS-STING pathway. Binds to N6-methyladenosine (m6A)-containing mRNAs and contributes to MYC stability by binding to m6A-containing MYC mRNAs. May bind to specific miRNA hairpins. The chain is Matrin-3 (Matr3) from Mus musculus (Mouse).